Reading from the N-terminus, the 303-residue chain is HTH-type transcriptional regulator LinR (303 aa).

In terms of domain architecture, HTH lysR-type spans 6 to 63; it reads LDFRHLVLLDALLKRHSVSAAARELDLPQPTASHGLARLRKALGDPLLVRARDGMEPT. Positions 23 to 42 form a DNA-binding region, H-T-H motif; that stretch reads VSAAARELDLPQPTASHGLA.

This sequence belongs to the LysR transcriptional regulatory family.

Positively regulates the transcription of the linD and linE genes that are involved in gamma-hexachlorocyclohexane (gamma-HCH or lindane) degradation. This degradation pathway allows S.japonicum UT26 to grow on gamma-HCH as the sole source of carbon and energy. This Sphingobium indicum (strain DSM 16413 / CCM 7287 / MTCC 6362 / UT26 / NBRC 101211 / UT26S) (Sphingobium japonicum) protein is HTH-type transcriptional regulator LinR (linR).